A 421-amino-acid polypeptide reads, in one-letter code: C4-dicarboxylate transport protein (421 aa).

A run of 8 helical transmembrane segments spans residues 9 to 29, 39 to 59, 76 to 96, 145 to 165, 185 to 205, 219 to 239, 316 to 336, and 348 to 368; these read VQVI…PDVG, FINA…VLGI, FIYF…VVNI, GDIL…AALG, IIGY…AYTI, LMMS…NIIC, VFGV…LMLT, and FIVL…GLAL.

This sequence belongs to the dicarboxylate/amino acid:cation symporter (DAACS) (TC 2.A.23) family.

It localises to the cell membrane. In terms of biological role, responsible for the transport of succinate and fumarate, but not malate, across the membrane. The chain is C4-dicarboxylate transport protein (dctA) from Bacillus subtilis (strain 168).